The following is a 316-amino-acid chain: CD276 antigen (316 aa).

An N-terminal signal peptide occupies residues 1 to 28 (MLRGWGGPSVGVCVRTALGVLCLCLTGA). One can recognise an Ig-like V-type domain in the interval 29-139 (VEVQVSEDPV…DSAAVSLQVA (111 aa)). Topologically, residues 29–248 (VEVQVSEDPV…GQPLTFPPEA (220 aa)) are extracellular. N-linked (GlcNAc...) asparagine glycosylation is found at asparagine 104, asparagine 189, and asparagine 215. The region spanning 145 to 238 (PSMTLEPNKD…QDAHGSVTIT (94 aa)) is the Ig-like C2-type domain. An intrachain disulfide couples cysteine 165 to cysteine 220. The chain crosses the membrane as a helical span at residues 249–269 (LWVTVGLSVCLVVLLVALAFV). The Cytoplasmic portion of the chain corresponds to 270-316 (CWRKIKQSCEEENAGAEDQDGDGEGSKTALRPLKPSENKEDDGQEIA). Over residues 280-292 (EENAGAEDQDGDG) the composition is skewed to acidic residues. Positions 280–316 (EENAGAEDQDGDGEGSKTALRPLKPSENKEDDGQEIA) are disordered.

Belongs to the immunoglobulin superfamily. BTN/MOG family. In terms of assembly, interacts with TREML2 and this interaction enhances T-cell activation. In terms of tissue distribution, ubiquitous.

It is found in the membrane. Its function is as follows. Modulates T-cell-mediated immune responses and the development of acute and chronic transplant rejection. Plays a positive regulatory role in bone formation and has a dual role in the bone-immune interface. Induces antitumor immunity as it activates both acquired and innate immunity leading to natural killer cell and CD8 T-cell dependent killing of tumor cells. The polypeptide is CD276 antigen (Cd276) (Mus musculus (Mouse)).